The chain runs to 462 residues: Retinoic acid receptor alpha (462 aa).

The interval 1–87 is modulating; that stretch reads MASNSSSCPT…PPPLPRIYKP (87 aa). Residues 52–64 are compositionally biased toward polar residues; it reads GYSTPSPATIETQ. Residues 52 to 77 are disordered; the sequence is GYSTPSPATIETQSSSSEEIVPSPPS. Serine 77 is modified (phosphoserine; by CDK7). 2 consecutive NR C4-type zinc fingers follow at residues 88–108 and 124–148; these read CFVC…CEGC and CHRD…LQKC. The nuclear receptor DNA-binding region spans 88–153; sequence CFVCQDKSSG…RLQKCFDVGM (66 aa). Position 96 is a phosphoserine; by PKB/AKT1 (serine 96). A hinge region spans residues 154–182; that stretch reads SKESVRNDRNKKKKEAPKPECSESYTLTP. Glycyl lysine isopeptide (Lys-Gly) (interchain with G-Cter in SUMO) cross-links involve residues lysine 166 and lysine 171. The region spanning 183–417 is the NR LBD domain; sequence EVGELIEKVR…PLIQEMLENS (235 aa). Position 219 is a phosphoserine; by PKA (serine 219). Cysteine 235 contacts all-trans-retinoate. A UBR5-degron motif is present at residues 254–258; sequence IADQI. Residue serine 287 participates in all-trans-retinoate binding. Lysine 347 is subject to N6,N6,N6-trimethyllysine. Residue serine 369 is modified to Phosphoserine; by PKA and RPS6KA5. A Glycyl lysine isopeptide (Lys-Gly) (interchain with G-Cter in SUMO) cross-link involves residue lysine 399. The required for binding corepressor NCOR1 stretch occupies residues 404 to 419; that stretch reads GSMPPLIQEMLENSEG. The short motif at 408–416 is the 9aaTAD element; the sequence is PLIQEMLEN. The disordered stretch occupies residues 420 to 462; sequence LDTLSGQSGGGTRDGGGLAPPPGSCSPSLSPSSHRSSPATQSP. Positions 426 to 437 are enriched in gly residues; sequence QSGGGTRDGGGL. Low complexity predominate over residues 444–462; that stretch reads CSPSLSPSSHRSSPATQSP.

It belongs to the nuclear hormone receptor family. NR1 subfamily. As to quaternary structure, heterodimer; with RXRA. Binds DNA preferentially as a heterodimer. RXRA serves as enhancer to induce RARA binding to RARE. Interacts with RXRG. Interacts with NCOA3 and NCOA6 coactivators, leading to a strong increase of transcription of target genes. Interacts with NCOA7; the interaction requires ligand-binding. Interacts (via the ligand-binding domain) with PRAME; interaction is direct and ligand (retinoic acid)-dependent. Interacts with PRKAR1A; the interaction negatively regulates RARA transcriptional activity. Interacts with NCOR1; the interaction occurs in the absence of ligand and represses transcriptional activity. Interacts with NCOR2. Interacts with PRMT2. Interacts with LRIF1. Interacts with ASXL1 and NCOA1. Interacts with ACTN4. Interacts with CDK7; the interaction is enhanced by interaction with GTF2H3. Interacts with GTF2H3; the interaction requires prior phosphorylation on Ser-369 which then enhances interaction with CDK7. In a complex with HDAC3, HDAC5 and HDAC7; the HDACs serve as corepressors of RARA, causing its deacetylation and inhibition of RARE DNA element binding; association with HDAC3, HDAC5 and HDAC7 is increased upon oscillatory shear stress. In the absence of hormonal ligand, interacts with TACC1. In terms of processing, phosphorylated on serine and threonine residues. Phosphorylation does not change during cell cycle. Phosphorylation on Ser-77 is crucial for the N-terminal AF1 transcriptional activity. Under stress conditions, MAPK8 enhances phosphorylation on Thr-181, Ser-445 and Ser-461 leading to RARA ubiquitination and degradation. Phosphorylation by AKT1 inhibits the transactivation activity. On retinoic acid stimulation, phosphorylation on Ser-369 by RPS6KA5 promotes interaction with GTF2H3 and the CDK7-mediated phosphorylation of Ser-77. Post-translationally, ubiquitinated by UBR5, leading to its degradation: UBR5 specifically recognizes and binds ligand-bound RARA when it is not associated with coactivators (NCOAs). In presence of NCOAs, the UBR5-degron is not accessible, preventing its ubiquitination and degradation. Sumoylated with SUMO2, mainly on Lys-399 which is also required for SENP6 binding. On all-trans retinoic acid (ATRA) binding, a conformational change may occur that allows sumoylation on two additional site, Lys-166 and Lys-171. Probably desumoylated by SENP6. Sumoylation levels determine nuclear localization and regulate ATRA-mediated transcriptional activity. In terms of processing, acetylated; acetylation is increased upon pulsatile shear stress and decreased upon oscillatory shear stress. Expressed in Sertoli cells and germ cells.

Its subcellular location is the nucleus. It is found in the cytoplasm. Its function is as follows. Receptor for retinoic acid. Retinoic acid receptors bind as heterodimers to their target response elements in response to their ligands, all-trans or 9-cis retinoic acid, and regulate gene expression in various biological processes. The RXR/RAR heterodimers bind to the retinoic acid response elements (RARE) composed of tandem 5'-AGGTCA-3' sites known as DR1-DR5. In the absence of ligand, the RXR-RAR heterodimers associate with a multiprotein complex containing transcription corepressors that induce histone deacetylation, chromatin condensation and transcriptional suppression. On ligand binding, the corepressors dissociate from the receptors and associate with the coactivators leading to transcriptional activation. Formation of heterocomplex with histone deacetylases might lead to inhibition of RARE DNA element binding and to transcriptional repression. Transcriptional activation and RARE DNA element binding might be supported by the transcription factor KLF2. RARA plays an essential role in the regulation of retinoic acid-induced germ cell development during spermatogenesis. Has a role in the survival of early spermatocytes at the beginning prophase of meiosis. In Sertoli cells, may promote the survival and development of early meiotic prophase spermatocytes. In concert with RARG, required for skeletal growth, matrix homeostasis and growth plate function. Together with RXRA, positively regulates microRNA-10a expression, thereby inhibiting the GATA6/VCAM1 signaling response to pulsatile shear stress in vascular endothelial cells. In association with HDAC3, HDAC5 and HDAC7 corepressors, plays a role in the repression of microRNA-10a and thereby promotes the inflammatory response. This chain is Retinoic acid receptor alpha (Rara), found in Mus musculus (Mouse).